Here is a 390-residue protein sequence, read N- to C-terminus: Transforming growth factor beta-1 proprotein (390 aa).

The signal sequence occupies residues 1–29 (MPPSGLRLLPLLLPLLWLLVLTPGRPAAG). A straightjacket domain region spans residues 30-74 (LSTCKTIDMELVKRKRIEAIRGQILSKLRLASPPSQGEVPPGPLP). Residues 75–271 (EAVLALYNST…ATPLERAQHL (197 aa)) form an arm domain region. 3 N-linked (GlcNAc...) asparagine glycosylation sites follow: Asn82, Asn136, and Asn176. A bowtie tail region spans residues 226–252 (DSRDNTLQVDINGFTTGRRGDLATIHG). The Cell attachment site motif lies at 244-246 (RGD). 4 disulfide bridges follow: Cys285–Cys294, Cys293–Cys356, Cys322–Cys387, and Cys326–Cys389.

This sequence belongs to the TGF-beta family. In terms of assembly, homodimer; disulfide-linked. Interacts with the serine proteases, HTRA1 and HTRA3: the interaction with either inhibits TGFB1-mediated signaling and the HTRA protease activity is required for this inhibition. May interact with THSD4; this interaction may lead to sequestration by FBN1 microfibril assembly and attenuation of TGFB signaling. Interacts with CD109, DPT and ASPN. Interacts with EFEMP2. Interacts with TSKU; the interaction contributes to regulation of the hair cycle. Homodimer; disulfide-linked. Interacts with transforming growth factor beta-1 (TGF-beta-1) chain; interaction is non-covalent and maintains TGF-beta-1 in a latent state; each latency-associated peptide (LAP) monomer interacts with TGF-beta-1 in the other monomer. Interacts with LTBP1; leading to regulation of TGF-beta-1 activation. Interacts with LRRC32/GARP; leading to regulation of TGF-beta-1 activation on the surface of activated regulatory T-cells (Tregs). Interacts with LRRC33/NRROS; leading to regulation of TGF-beta-1 in macrophages and microglia. Interacts (via cell attachment site) with integrins ITGAV and ITGB6 (ITGAV:ITGB6), leading to release of the active TGF-beta-1. Interacts with NREP; the interaction results in a decrease in TGFB1 autoinduction. Interacts with HSP90AB1; inhibits latent TGFB1 activation. Interact with PSG9; leading to TGFB1 activation. Interacts with TGFBR3. As to quaternary structure, homodimer; disulfide-linked. Interacts with TGF-beta receptors (TGFBR1 and TGFBR2), leading to signal transduction. Transforming growth factor beta-1 proprotein: The precursor proprotein is cleaved in the Golgi apparatus by FURIN to form Transforming growth factor beta-1 (TGF-beta-1) and Latency-associated peptide (LAP) chains, which remain non-covalently linked, rendering TGF-beta-1 inactive. In terms of processing, N-glycosylated. Deglycosylation leads to activation of Transforming growth factor beta-1 (TGF-beta-1); mechanisms triggering deglycosylation-driven activation of TGF-beta-1 are however unclear. In terms of tissue distribution, highly expressed in bone. Abundantly expressed in articular cartilage and chondrocytes and is increased in osteoarthritis (OA). Colocalizes with ASPN in chondrocytes within OA lesions of articular cartilage.

Its subcellular location is the secreted. The protein localises to the extracellular space. It is found in the extracellular matrix. In terms of biological role, transforming growth factor beta-1 proprotein: Precursor of the Latency-associated peptide (LAP) and Transforming growth factor beta-1 (TGF-beta-1) chains, which constitute the regulatory and active subunit of TGF-beta-1, respectively. Its function is as follows. Required to maintain the Transforming growth factor beta-1 (TGF-beta-1) chain in a latent state during storage in extracellular matrix. Associates non-covalently with TGF-beta-1 and regulates its activation via interaction with 'milieu molecules', such as LTBP1, LRRC32/GARP and LRRC33/NRROS, that control activation of TGF-beta-1. Interaction with LRRC33/NRROS regulates activation of TGF-beta-1 in macrophages and microglia. Interaction with LRRC32/GARP controls activation of TGF-beta-1 on the surface of activated regulatory T-cells (Tregs). Interaction with integrins (ITGAV:ITGB6 or ITGAV:ITGB8) results in distortion of the Latency-associated peptide chain and subsequent release of the active TGF-beta-1. Functionally, multifunctional protein that regulates the growth and differentiation of various cell types and is involved in various processes, such as normal development, immune function, microglia function and responses to neurodegeneration. Activation into mature form follows different steps: following cleavage of the proprotein in the Golgi apparatus, Latency-associated peptide (LAP) and Transforming growth factor beta-1 (TGF-beta-1) chains remain non-covalently linked rendering TGF-beta-1 inactive during storage in extracellular matrix. At the same time, LAP chain interacts with 'milieu molecules', such as LTBP1, LRRC32/GARP and LRRC33/NRROS that control activation of TGF-beta-1 and maintain it in a latent state during storage in extracellular milieus. TGF-beta-1 is released from LAP by integrins (ITGAV:ITGB6 or ITGAV:ITGB8): integrin-binding to LAP stabilizes an alternative conformation of the LAP bowtie tail and results in distortion of the LAP chain and subsequent release of the active TGF-beta-1. Once activated following release of LAP, TGF-beta-1 acts by binding to TGF-beta receptors (TGFBR1 and TGFBR2), which transduce signal. While expressed by many cells types, TGF-beta-1 only has a very localized range of action within cell environment thanks to fine regulation of its activation by Latency-associated peptide chain (LAP) and 'milieu molecules'. Plays an important role in bone remodeling: acts as a potent stimulator of osteoblastic bone formation, causing chemotaxis, proliferation and differentiation in committed osteoblasts. Can promote either T-helper 17 cells (Th17) or regulatory T-cells (Treg) lineage differentiation in a concentration-dependent manner. At high concentrations, leads to FOXP3-mediated suppression of RORC and down-regulation of IL-17 expression, favoring Treg cell development. At low concentrations in concert with IL-6 and IL-21, leads to expression of the IL-17 and IL-23 receptors, favoring differentiation to Th17 cells. Stimulates sustained production of collagen through the activation of CREB3L1 by regulated intramembrane proteolysis (RIP). Mediates SMAD2/3 activation by inducing its phosphorylation and subsequent translocation to the nucleus. Positively regulates odontoblastic differentiation in dental papilla cells, via promotion of IPO7-mediated translocation of phosphorylated SMAD2 to the nucleus and subsequent transcription of target genes. Can induce epithelial-to-mesenchymal transition (EMT) and cell migration in various cell types. This Homo sapiens (Human) protein is Transforming growth factor beta-1 proprotein.